A 401-amino-acid chain; its full sequence is Argininosuccinate synthase (401 aa).

Residues 10–18 (AYSGGVDTS) and alanine 38 contribute to the ATP site. An L-citrulline-binding site is contributed by tyrosine 89. Glycine 119 contacts ATP. The L-aspartate site is built by threonine 121, asparagine 125, and aspartate 126. Asparagine 125 contributes to the L-citrulline binding site. The L-citrulline site is built by arginine 129, serine 177, serine 186, glutamate 262, and tyrosine 274.

The protein belongs to the argininosuccinate synthase family. Type 1 subfamily. In terms of assembly, homotetramer.

Its subcellular location is the cytoplasm. The catalysed reaction is L-citrulline + L-aspartate + ATP = 2-(N(omega)-L-arginino)succinate + AMP + diphosphate + H(+). It participates in amino-acid biosynthesis; L-arginine biosynthesis; L-arginine from L-ornithine and carbamoyl phosphate: step 2/3. This chain is Argininosuccinate synthase, found in Synechococcus sp. (strain WH7803).